The chain runs to 378 residues: Myoglobin (378 aa).

Blocked amino end (Ala) is present on A2. Position 332 (H332) interacts with heme.

It belongs to the indoleamine 2,3-dioxygenase family. Homodimer. Heme is required as a cofactor.

In terms of biological role, serves a reserve supply of oxygen and facilitates the movement of oxygen within muscles. This Haliotis diversicolor (Abalone) protein is Myoglobin.